The primary structure comprises 347 residues: NADH-ubiquinone oxidoreductase chain 2 (347 aa).

The next 11 membrane-spanning stretches (helical) occupy residues 1–21, 25–45, 60–80, 89–109, 111–131, 149–169, 178–198, 201–221, 242–262, 274–294, and 323–343; these read MNPIVFSTILTTAIMGTMIVM, HWLMIWIGFEMNLLAIIPILM, FLTQATASMLLMMAIIINLMF, IFNPTASIIMTSALIMKLGLS, FHFWVPEVTQGIPLVSGLILL, INLDMLMTSALLSILVGGWGG, IMAYSSIAHMGWMTAILTYNP, TALNMLIYIMMTLTTFMLFML, SLILITMLSLGGLPPLSGFIP, DSIILPTSMAIMALLNLYFYM, and MNFLPTLIIMSTLLLPLTPIM.

This sequence belongs to the complex I subunit 2 family. Core subunit of respiratory chain NADH dehydrogenase (Complex I) which is composed of 45 different subunits. Interacts with TMEM242.

The protein localises to the mitochondrion inner membrane. It catalyses the reaction a ubiquinone + NADH + 5 H(+)(in) = a ubiquinol + NAD(+) + 4 H(+)(out). In terms of biological role, core subunit of the mitochondrial membrane respiratory chain NADH dehydrogenase (Complex I) which catalyzes electron transfer from NADH through the respiratory chain, using ubiquinone as an electron acceptor. Essential for the catalytic activity and assembly of complex I. In Ceratotherium simum (White rhinoceros), this protein is NADH-ubiquinone oxidoreductase chain 2.